Here is a 597-residue protein sequence, read N- to C-terminus: Aspartate--tRNA(Asp/Asn) ligase (597 aa).

Glutamate 176 contacts L-aspartate. The interval 200–203 is aspartate; the sequence is QQFK. L-aspartate is bound by residues arginine 222 and histidine 451. An ATP-binding site is contributed by 222 to 224; sequence RDE. Glutamate 489 serves as a coordination point for ATP. Arginine 496 lines the L-aspartate pocket. 541 to 544 provides a ligand contact to ATP; it reads GIDR.

Belongs to the class-II aminoacyl-tRNA synthetase family. Type 1 subfamily. Homodimer.

The protein localises to the cytoplasm. It catalyses the reaction tRNA(Asx) + L-aspartate + ATP = L-aspartyl-tRNA(Asx) + AMP + diphosphate. Functionally, aspartyl-tRNA synthetase with relaxed tRNA specificity since it is able to aspartylate not only its cognate tRNA(Asp) but also tRNA(Asn). Reaction proceeds in two steps: L-aspartate is first activated by ATP to form Asp-AMP and then transferred to the acceptor end of tRNA(Asp/Asn). The polypeptide is Aspartate--tRNA(Asp/Asn) ligase (Orientia tsutsugamushi (strain Boryong) (Rickettsia tsutsugamushi)).